Here is a 220-residue protein sequence, read N- to C-terminus: Histone deacetylase complex subunit SAP30 (220 aa).

The interaction with NCOR1 stretch occupies residues 1–129 (MNGFTPEEMS…QSVRNRRKRK (129 aa)). T5 bears the Phosphothreonine mark. The Atypical zinc finger occupies 67–115 (CCLREDGERCGRAAGNASFSKRIQKSISQKKVKIELDKSARHLYICDYH). Residue K87 forms a Glycyl lysine isopeptide (Lys-Gly) (interchain with G-Cter in SUMO2) linkage. Residues 123-143 (RNRRKRKGSDDDGGDSPVQDI) are disordered. Positions 130-220 (GSDDDGGDSP…SDLKADSGVH (91 aa)) are interaction with SIN3A. S131 and S138 each carry phosphoserine. T145 is subject to Phosphothreonine. Glycyl lysine isopeptide (Lys-Gly) (interchain with G-Cter in SUMO2) cross-links involve residues K194 and K214.

This sequence belongs to the SAP30 family. As to quaternary structure, component of the histone deacetylase complex that includes at least SIN3A, HDAC1 and HDAC2. Found in a complex composed of at least SINHCAF, SIN3A, HDAC1, SAP30, RBBP4, OGT and TET1. Interacts with HDAC1. Interacts with SIN3A, SIN3B, HDAC2, RBBP4 and NCOR1. Interacts directly with SAMSN1. Interacts with HCFC1. Interacts with SAP30BP.

The protein localises to the nucleus. Its function is as follows. Involved in the functional recruitment of the Sin3-histone deacetylase complex (HDAC) to a specific subset of N-CoR corepressor complexes. Capable of transcription repression by N-CoR. Active in deacetylating core histone octamers (when in a complex) but inactive in deacetylating nucleosomal histones. This Mus musculus (Mouse) protein is Histone deacetylase complex subunit SAP30.